Reading from the N-terminus, the 463-residue chain is 23S rRNA (uracil(1939)-C(5))-methyltransferase RlmD (463 aa).

The TRAM domain occupies 8 to 76; the sequence is RSKSATVYTF…KRFEEGELIE (69 aa). The [4Fe-4S] cluster site is built by cysteine 90, cysteine 96, cysteine 99, and cysteine 178. Glutamine 288, phenylalanine 317, asparagine 322, glutamate 341, aspartate 368, and aspartate 389 together coordinate S-adenosyl-L-methionine. Cysteine 415 serves as the catalytic Nucleophile.

This sequence belongs to the class I-like SAM-binding methyltransferase superfamily. RNA M5U methyltransferase family. RlmD subfamily.

The catalysed reaction is uridine(1939) in 23S rRNA + S-adenosyl-L-methionine = 5-methyluridine(1939) in 23S rRNA + S-adenosyl-L-homocysteine + H(+). In terms of biological role, catalyzes the formation of 5-methyl-uridine at position 1939 (m5U1939) in 23S rRNA. The sequence is that of 23S rRNA (uracil(1939)-C(5))-methyltransferase RlmD from Acinetobacter baylyi (strain ATCC 33305 / BD413 / ADP1).